A 127-amino-acid polypeptide reads, in one-letter code: Large ribosomal subunit protein uL18 (127 aa).

This sequence belongs to the universal ribosomal protein uL18 family. In terms of assembly, part of the 50S ribosomal subunit; part of the 5S rRNA/L5/L18/L25 subcomplex. Contacts the 5S and 23S rRNAs.

Its function is as follows. This is one of the proteins that bind and probably mediate the attachment of the 5S RNA into the large ribosomal subunit, where it forms part of the central protuberance. This chain is Large ribosomal subunit protein uL18, found in Streptomyces coelicolor (strain ATCC BAA-471 / A3(2) / M145).